The following is a 434-amino-acid chain: Salicylate hydroxylase (434 aa).

9 to 38 (RIGIVGGGISGVALALELCRYSHIQVQLFE) lines the FAD pocket.

In terms of assembly, monomer. The cofactor is FAD.

It carries out the reaction salicylate + NADH + O2 + 2 H(+) = catechol + CO2 + NAD(+) + H2O. It participates in aromatic compound metabolism; naphthalene degradation. This chain is Salicylate hydroxylase (nahG), found in Pseudomonas putida (Arthrobacter siderocapsulatus).